Reading from the N-terminus, the 74-residue chain is Exodeoxyribonuclease 7 small subunit (74 aa).

The protein belongs to the XseB family. Heterooligomer composed of large and small subunits.

Its subcellular location is the cytoplasm. It catalyses the reaction Exonucleolytic cleavage in either 5'- to 3'- or 3'- to 5'-direction to yield nucleoside 5'-phosphates.. In terms of biological role, bidirectionally degrades single-stranded DNA into large acid-insoluble oligonucleotides, which are then degraded further into small acid-soluble oligonucleotides. This is Exodeoxyribonuclease 7 small subunit from Vesicomyosocius okutanii subsp. Calyptogena okutanii (strain HA).